A 347-amino-acid chain; its full sequence is RNA 3'-terminal phosphate cyclase (347 aa).

ATP is bound by residues Gln109 and 290–294; that span reads YLADQ. His315 (tele-AMP-histidine intermediate) is an active-site residue.

It belongs to the RNA 3'-terminal cyclase family. Type 1 subfamily.

It is found in the cytoplasm. The catalysed reaction is a 3'-end 3'-phospho-ribonucleotide-RNA + ATP = a 3'-end 2',3'-cyclophospho-ribonucleotide-RNA + AMP + diphosphate. Its function is as follows. Catalyzes the conversion of 3'-phosphate to a 2',3'-cyclic phosphodiester at the end of RNA. The mechanism of action of the enzyme occurs in 3 steps: (A) adenylation of the enzyme by ATP; (B) transfer of adenylate to an RNA-N3'P to produce RNA-N3'PP5'A; (C) and attack of the adjacent 2'-hydroxyl on the 3'-phosphorus in the diester linkage to produce the cyclic end product. The biological role of this enzyme is unknown but it is likely to function in some aspects of cellular RNA processing. This chain is RNA 3'-terminal phosphate cyclase, found in Ralstonia nicotianae (strain ATCC BAA-1114 / GMI1000) (Ralstonia solanacearum).